The chain runs to 218 residues: N-(5'-phosphoribosyl)anthranilate isomerase (218 aa).

Belongs to the TrpF family.

It catalyses the reaction N-(5-phospho-beta-D-ribosyl)anthranilate = 1-(2-carboxyphenylamino)-1-deoxy-D-ribulose 5-phosphate. It functions in the pathway amino-acid biosynthesis; L-tryptophan biosynthesis; L-tryptophan from chorismate: step 3/5. This chain is N-(5'-phosphoribosyl)anthranilate isomerase, found in Acetivibrio thermocellus (strain ATCC 27405 / DSM 1237 / JCM 9322 / NBRC 103400 / NCIMB 10682 / NRRL B-4536 / VPI 7372) (Clostridium thermocellum).